The sequence spans 626 residues: Chaperone protein HtpG (626 aa).

The segment at 1–339 is a; substrate-binding; it reads MSQNQETRGF…SNDLPLNVSR (339 aa). The b stretch occupies residues 340 to 555; the sequence is EILQDNKITA…NDQMTTQMAK (216 aa). The tract at residues 556–626 is c; it reads LFAAAGQPVP…FIKRINKLLG (71 aa).

Belongs to the heat shock protein 90 family. As to quaternary structure, homodimer.

Its subcellular location is the cytoplasm. Its function is as follows. Molecular chaperone. Has ATPase activity. This Haemophilus influenzae (strain PittEE) protein is Chaperone protein HtpG.